Consider the following 523-residue polypeptide: 2-isopropylmalate synthase (523 aa).

Residues 5–267 (VIIFDTTLRD…HTNINHHEIW (263 aa)) form the Pyruvate carboxyltransferase domain. 4 residues coordinate Mn(2+): D14, H202, H204, and N238. A regulatory domain region spans residues 392 to 523 (RLDYFNVQSG…QNKENNKETV (132 aa)).

The protein belongs to the alpha-IPM synthase/homocitrate synthase family. LeuA type 1 subfamily. In terms of assembly, homodimer. Mn(2+) serves as cofactor.

It is found in the cytoplasm. The enzyme catalyses 3-methyl-2-oxobutanoate + acetyl-CoA + H2O = (2S)-2-isopropylmalate + CoA + H(+). It participates in amino-acid biosynthesis; L-leucine biosynthesis; L-leucine from 3-methyl-2-oxobutanoate: step 1/4. Functionally, catalyzes the condensation of the acetyl group of acetyl-CoA with 3-methyl-2-oxobutanoate (2-ketoisovalerate) to form 3-carboxy-3-hydroxy-4-methylpentanoate (2-isopropylmalate). The chain is 2-isopropylmalate synthase from Klebsiella pneumoniae subsp. pneumoniae (strain ATCC 700721 / MGH 78578).